We begin with the raw amino-acid sequence, 533 residues long: Retinoid isomerohydrolase (533 aa).

Residue S2 is modified to N-acetylserine. Phosphothreonine is present on residues T101 and T105. The S-palmitoyl cysteine; in membrane form moiety is linked to residue C112. K113 carries the post-translational modification N6-acetyllysine. Position 117 is a phosphoserine (S117). Residue H180 participates in Fe cation binding. C231 is lipidated: S-palmitoyl cysteine; in membrane form. 2 residues coordinate Fe cation: H241 and H313. 2 S-palmitoyl cysteine; in membrane form lipidation sites follow: C329 and C330. H527 is a binding site for Fe cation.

It belongs to the carotenoid oxygenase family. In terms of assembly, interacts with MYO7A; this mediates light-dependent intracellular transport of RPE65. Fe(2+) serves as cofactor. Palmitoylation by LRAT regulates ligand binding specificity; the palmitoylated form (membrane form) specifically binds all-trans-retinyl-palmitate, while the soluble unpalmitoylated form binds all-trans-retinol (vitamin A). As to expression, retinal pigment epithelium specific.

Its subcellular location is the cytoplasm. The protein resides in the cell membrane. It is found in the microsome membrane. It carries out the reaction an all-trans-retinyl ester + H2O = 11-cis-retinol + a fatty acid + H(+). It catalyses the reaction lutein = (3R,3'S)-zeaxanthin. The enzyme catalyses all-trans-retinyl hexadecanoate + H2O = 11-cis-retinol + hexadecanoate + H(+). In terms of biological role, critical isomerohydrolase in the retinoid cycle involved in regeneration of 11-cis-retinal, the chromophore of rod and cone opsins. Catalyzes the cleavage and isomerization of all-trans-retinyl fatty acid esters to 11-cis-retinol which is further oxidized by 11-cis retinol dehydrogenase to 11-cis-retinal for use as visual chromophore. Essential for the production of 11-cis retinal for both rod and cone photoreceptors. Also capable of catalyzing the isomerization of lutein to meso-zeaxanthin an eye-specific carotenoid. The soluble form binds vitamin A (all-trans-retinol), making it available for LRAT processing to all-trans-retinyl ester. The membrane form, palmitoylated by LRAT, binds all-trans-retinyl esters, making them available for IMH (isomerohydrolase) processing to all-cis-retinol. The soluble form is regenerated by transferring its palmitoyl groups onto 11-cis-retinol, a reaction catalyzed by LRAT. The polypeptide is Retinoid isomerohydrolase (Rpe65) (Mus musculus (Mouse)).